Here is a 473-residue protein sequence, read N- to C-terminus: UDP-N-acetylmuramate--L-alanine ligase (473 aa).

Residue 112-118 participates in ATP binding; the sequence is GTHGKTT.

Belongs to the MurCDEF family.

The protein localises to the cytoplasm. It carries out the reaction UDP-N-acetyl-alpha-D-muramate + L-alanine + ATP = UDP-N-acetyl-alpha-D-muramoyl-L-alanine + ADP + phosphate + H(+). It participates in cell wall biogenesis; peptidoglycan biosynthesis. Functionally, cell wall formation. This chain is UDP-N-acetylmuramate--L-alanine ligase, found in Nitrosomonas europaea (strain ATCC 19718 / CIP 103999 / KCTC 2705 / NBRC 14298).